A 217-amino-acid polypeptide reads, in one-letter code: Cytidylate kinase (217 aa).

9–17 (GPAGAGKST) is an ATP binding site.

Belongs to the cytidylate kinase family. Type 1 subfamily.

The protein resides in the cytoplasm. It catalyses the reaction CMP + ATP = CDP + ADP. The enzyme catalyses dCMP + ATP = dCDP + ADP. The polypeptide is Cytidylate kinase (Clostridium acetobutylicum (strain ATCC 824 / DSM 792 / JCM 1419 / IAM 19013 / LMG 5710 / NBRC 13948 / NRRL B-527 / VKM B-1787 / 2291 / W)).